We begin with the raw amino-acid sequence, 428 residues long: Tyrosine--tRNA ligase (428 aa).

L-tyrosine is bound at residue Tyr-41. The 'HIGH' region signature appears at 46–55 (PTADSLHLGH). Tyr-179 and Gln-183 together coordinate L-tyrosine. A 'KMSKS' region motif is present at residues 239 to 243 (KFGKT). Lys-242 is a binding site for ATP. One can recognise an S4 RNA-binding domain in the interval 361-418 (ADLMQALVDAELQPSRGQARKTIASNAVTINGEKQSDPEYIFNDEDRLFGRYTLLRRG).

Belongs to the class-I aminoacyl-tRNA synthetase family. TyrS type 1 subfamily. Homodimer.

The protein resides in the cytoplasm. It catalyses the reaction tRNA(Tyr) + L-tyrosine + ATP = L-tyrosyl-tRNA(Tyr) + AMP + diphosphate + H(+). Catalyzes the attachment of tyrosine to tRNA(Tyr) in a two-step reaction: tyrosine is first activated by ATP to form Tyr-AMP and then transferred to the acceptor end of tRNA(Tyr). This is Tyrosine--tRNA ligase from Salmonella paratyphi C (strain RKS4594).